A 1131-amino-acid chain; its full sequence is Chitin synthase 1 (1131 aa).

Basic and acidic residues predominate over residues 1 to 20; that stretch reads MSDQNNRSRNEYHSNRKNEP. A disordered region spans residues 1–22; the sequence is MSDQNNRSRNEYHSNRKNEPSY. Residues Ser34, Ser35, Ser270, Ser299, and Ser318 each carry the phosphoserine modification. The disordered stretch occupies residues 282–305; that stretch reads YLHDDSRPVNDGKEELDSVKSGYS. At Thr328 the chain carries Phosphothreonine. Phosphoserine is present on Ser358. The next 7 helical transmembrane spans lie at 795-815, 833-853, 866-886, 914-934, 942-962, 1042-1062, and 1101-1121; these read FFYL…FFLV, VLSV…FILS, VLTC…SIFM, IVIS…IYLQ, FIQY…YAFC, LVII…LETG, and ILWL…IYMI.

This sequence belongs to the chitin synthase family.

It localises to the cell membrane. The enzyme catalyses [(1-&gt;4)-N-acetyl-beta-D-glucosaminyl](n) + UDP-N-acetyl-alpha-D-glucosamine = [(1-&gt;4)-N-acetyl-beta-D-glucosaminyl](n+1) + UDP + H(+). Requires proteolytic activation. Functionally, polymerizes chitin, a structural polymer of the cell wall and septum, by transferring the sugar moiety of UDP-GlcNAc to the non-reducing end of the growing chitin polymer. Required for mitotic division septum formation during adverse conditions. The protein is Chitin synthase 1 (CHS1) of Saccharomyces cerevisiae (strain ATCC 204508 / S288c) (Baker's yeast).